A 173-amino-acid chain; its full sequence is Crossover junction endodeoxyribonuclease RuvC (173 aa).

Catalysis depends on residues D8, E67, and D139. 3 residues coordinate Mg(2+): D8, E67, and D139.

The protein belongs to the RuvC family. In terms of assembly, homodimer which binds Holliday junction (HJ) DNA. The HJ becomes 2-fold symmetrical on binding to RuvC with unstacked arms; it has a different conformation from HJ DNA in complex with RuvA. In the full resolvosome a probable DNA-RuvA(4)-RuvB(12)-RuvC(2) complex forms which resolves the HJ. Mg(2+) is required as a cofactor.

The protein localises to the cytoplasm. It carries out the reaction Endonucleolytic cleavage at a junction such as a reciprocal single-stranded crossover between two homologous DNA duplexes (Holliday junction).. Functionally, the RuvA-RuvB-RuvC complex processes Holliday junction (HJ) DNA during genetic recombination and DNA repair. Endonuclease that resolves HJ intermediates. Cleaves cruciform DNA by making single-stranded nicks across the HJ at symmetrical positions within the homologous arms, yielding a 5'-phosphate and a 3'-hydroxyl group; requires a central core of homology in the junction. The consensus cleavage sequence is 5'-(A/T)TT(C/G)-3'. Cleavage occurs on the 3'-side of the TT dinucleotide at the point of strand exchange. HJ branch migration catalyzed by RuvA-RuvB allows RuvC to scan DNA until it finds its consensus sequence, where it cleaves and resolves the cruciform DNA. This Shewanella sp. (strain MR-4) protein is Crossover junction endodeoxyribonuclease RuvC.